A 648-amino-acid chain; its full sequence is Chaperone protein HtpG (648 aa).

The a; substrate-binding stretch occupies residues 1–349; that stretch reads MTTEHAAGAQ…SSDLPLNVSR (349 aa). A b region spans residues 350 to 570; sequence EILQESKDID…EHDVGMNLAR (221 aa). The c stretch occupies residues 571–648; the sequence is ILKAAGQQAP…MAMGGSAGTD (78 aa).

Belongs to the heat shock protein 90 family. Homodimer.

Its subcellular location is the cytoplasm. Molecular chaperone. Has ATPase activity. This Aromatoleum aromaticum (strain DSM 19018 / LMG 30748 / EbN1) (Azoarcus sp. (strain EbN1)) protein is Chaperone protein HtpG.